A 455-amino-acid chain; its full sequence is Phosphoglucosamine mutase (455 aa).

Ser102 functions as the Phosphoserine intermediate in the catalytic mechanism. Mg(2+) contacts are provided by Ser102, Asp241, Asp243, and Asp245. Position 102 is a phosphoserine (Ser102).

Belongs to the phosphohexose mutase family. The cofactor is Mg(2+). Post-translationally, activated by phosphorylation.

It catalyses the reaction alpha-D-glucosamine 1-phosphate = D-glucosamine 6-phosphate. Its function is as follows. Catalyzes the conversion of glucosamine-6-phosphate to glucosamine-1-phosphate. This Legionella pneumophila (strain Corby) protein is Phosphoglucosamine mutase.